A 121-amino-acid polypeptide reads, in one-letter code: Small ribosomal subunit protein uS13 (121 aa).

The tract at residues 93–121 (RGLPMRGQRTRTNARTRKGPRKGAAALKK) is disordered.

It belongs to the universal ribosomal protein uS13 family. Part of the 30S ribosomal subunit. Forms a loose heterodimer with protein S19. Forms two bridges to the 50S subunit in the 70S ribosome.

Functionally, located at the top of the head of the 30S subunit, it contacts several helices of the 16S rRNA. In the 70S ribosome it contacts the 23S rRNA (bridge B1a) and protein L5 of the 50S subunit (bridge B1b), connecting the 2 subunits; these bridges are implicated in subunit movement. Contacts the tRNAs in the A and P-sites. In Acidovorax ebreus (strain TPSY) (Diaphorobacter sp. (strain TPSY)), this protein is Small ribosomal subunit protein uS13.